Here is a 157-residue protein sequence, read N- to C-terminus: Putative dehydration-responsive element-binding protein 2H (157 aa).

The Nuclear localization signal signature appears at 5 to 21 (RKSRGTRDVAEILRKWR). The segment at 29-57 (ADSCIDGGGSKPIRKAPPKRSRKGCMKGK) is disordered. Residues 40–54 (PIRKAPPKRSRKGCM) are compositionally biased toward basic residues. Positions 66-123 (DYTGVRQRTWGKWVAEIREPGRGAKLWLGTFSSSYEAALAYDEASKAIYGQSARLNLP) form a DNA-binding region, AP2/ERF.

It belongs to the AP2/ERF transcription factor family. ERF subfamily.

The protein localises to the nucleus. Functionally, putative transcriptional activator that binds specifically to the DNA sequence 5'-[AG]CCGAC-3'. This Arabidopsis thaliana (Mouse-ear cress) protein is Putative dehydration-responsive element-binding protein 2H (DREB2H).